Consider the following 99-residue polypeptide: Large ribosomal subunit protein bL27 (99 aa).

A propeptide spanning residues 1–9 is cleaved from the precursor; that stretch reads MLLMNLQLF.

This sequence belongs to the bacterial ribosomal protein bL27 family. The N-terminus is cleaved by ribosomal processing cysteine protease Prp.

The chain is Large ribosomal subunit protein bL27 from Clostridium novyi (strain NT).